We begin with the raw amino-acid sequence, 178 residues long: Large ribosomal subunit protein uL6 (178 aa).

This sequence belongs to the universal ribosomal protein uL6 family. In terms of assembly, part of the 50S ribosomal subunit.

In terms of biological role, this protein binds to the 23S rRNA, and is important in its secondary structure. It is located near the subunit interface in the base of the L7/L12 stalk, and near the tRNA binding site of the peptidyltransferase center. This Francisella tularensis subsp. mediasiatica (strain FSC147) protein is Large ribosomal subunit protein uL6.